The chain runs to 236 residues: Ubiquinone biosynthesis O-methyltransferase (236 aa).

Positions 36, 56, 77, and 125 each coordinate S-adenosyl-L-methionine.

Belongs to the methyltransferase superfamily. UbiG/COQ3 family.

It carries out the reaction a 3-demethylubiquinol + S-adenosyl-L-methionine = a ubiquinol + S-adenosyl-L-homocysteine + H(+). It catalyses the reaction a 3-(all-trans-polyprenyl)benzene-1,2-diol + S-adenosyl-L-methionine = a 2-methoxy-6-(all-trans-polyprenyl)phenol + S-adenosyl-L-homocysteine + H(+). It functions in the pathway cofactor biosynthesis; ubiquinone biosynthesis. In terms of biological role, O-methyltransferase that catalyzes the 2 O-methylation steps in the ubiquinone biosynthetic pathway. The protein is Ubiquinone biosynthesis O-methyltransferase of Glaesserella parasuis serovar 5 (strain SH0165) (Haemophilus parasuis).